Reading from the N-terminus, the 110-residue chain is Phosphoribosyl-AMP cyclohydrolase (110 aa).

Position 80 (aspartate 80) interacts with Mg(2+). Residue cysteine 81 participates in Zn(2+) binding. Positions 82 and 84 each coordinate Mg(2+). 2 residues coordinate Zn(2+): cysteine 97 and cysteine 104.

This sequence belongs to the PRA-CH family. In terms of assembly, homodimer. Mg(2+) is required as a cofactor. It depends on Zn(2+) as a cofactor.

It is found in the cytoplasm. It carries out the reaction 1-(5-phospho-beta-D-ribosyl)-5'-AMP + H2O = 1-(5-phospho-beta-D-ribosyl)-5-[(5-phospho-beta-D-ribosylamino)methylideneamino]imidazole-4-carboxamide. It functions in the pathway amino-acid biosynthesis; L-histidine biosynthesis; L-histidine from 5-phospho-alpha-D-ribose 1-diphosphate: step 3/9. In terms of biological role, catalyzes the hydrolysis of the adenine ring of phosphoribosyl-AMP. The protein is Phosphoribosyl-AMP cyclohydrolase of Clostridium botulinum (strain Okra / Type B1).